A 128-amino-acid chain; its full sequence is MDSSNPSSLPLEKSSGNVQKGKLLNIWSRCIAQPSSFLGSSISRFWANADIKNRVCSAAIGRVNFVSKCLKKFPEVSLSCNISASLSLNTGKEKVKNEDLEKQERCHKVAMIEYEIQNLERQLKKRQF.

This is an uncharacterized protein from Caenorhabditis elegans.